We begin with the raw amino-acid sequence, 393 residues long: tRNA-specific 2-thiouridylase MnmA (393 aa).

ATP contacts are provided by residues 19–26 and L45; that span reads AMSGGVDS. The Nucleophile role is filled by C113. C113 and C210 are oxidised to a cystine. G137 contacts ATP. Residues 160–162 are interaction with tRNA; the sequence is RDQ. Residue C210 is the Cysteine persulfide intermediate of the active site.

The protein belongs to the MnmA/TRMU family.

It is found in the cytoplasm. The enzyme catalyses S-sulfanyl-L-cysteinyl-[protein] + uridine(34) in tRNA + AH2 + ATP = 2-thiouridine(34) in tRNA + L-cysteinyl-[protein] + A + AMP + diphosphate + H(+). Catalyzes the 2-thiolation of uridine at the wobble position (U34) of tRNA, leading to the formation of s(2)U34. The protein is tRNA-specific 2-thiouridylase MnmA of Afipia carboxidovorans (strain ATCC 49405 / DSM 1227 / KCTC 32145 / OM5) (Oligotropha carboxidovorans).